The following is a 99-amino-acid chain: Integration host factor subunit alpha (99 aa).

A disordered region spans residues 49 to 70; it reads FGNFDLRDKNQRPGRNPKTGED.

This sequence belongs to the bacterial histone-like protein family. As to quaternary structure, heterodimer of an alpha and a beta chain.

Functionally, this protein is one of the two subunits of integration host factor, a specific DNA-binding protein that functions in genetic recombination as well as in transcriptional and translational control. In Cronobacter sakazakii (strain ATCC BAA-894) (Enterobacter sakazakii), this protein is Integration host factor subunit alpha.